The primary structure comprises 625 residues: Autophagy-related protein 13b (625 aa).

Low complexity-rich tracts occupy residues 322–332 and 455–477; these read PSVSCSPSPTR and PSGV…SSRS. Disordered stretches follow at residues 322–388, 452–527, and 544–564; these read PSVS…AVPR, FRRP…YPKK, and PPLR…NNNK. The span at 498-518 shows a compositional bias: basic and acidic residues; it reads ITDRNSRPGSFDHRGDIHEPF.

This sequence belongs to the ATG13 family. Plant subfamily.

It localises to the cytoplasmic vesicle. The protein resides in the autophagosome. Involved in autophagy in a nutritional condition dependent manner. The ATG1-ATG13 protein kinase complex regulates downstream events required for autophagosome enclosure and/or vacuolar delivery. Becomes a target of autophagy under nutrient starvation. Connects autophagy to plant nutritional status. The polypeptide is Autophagy-related protein 13b (Arabidopsis thaliana (Mouse-ear cress)).